A 205-amino-acid chain; its full sequence is High frequency lysogenization protein HflD homolog (205 aa).

Belongs to the HflD family.

The protein localises to the cytoplasm. It localises to the cell inner membrane. This is High frequency lysogenization protein HflD homolog from Shewanella oneidensis (strain ATCC 700550 / JCM 31522 / CIP 106686 / LMG 19005 / NCIMB 14063 / MR-1).